The following is a 449-amino-acid chain: Zinc finger and BTB domain-containing protein 14 (449 aa).

Residues cysteine 36 to lysine 102 enclose the BTB domain. Lysine 46 is covalently cross-linked (Glycyl lysine isopeptide (Lys-Gly) (interchain with G-Cter in SUMO2)). The Nuclear localization signal motif lies at histidine 50 to lysine 66. The tract at residues glycine 153–threonine 194 is disordered. The segment covering aspartate 157 to valine 178 has biased composition (acidic residues). Glycyl lysine isopeptide (Lys-Gly) (interchain with G-Cter in SUMO2) cross-links involve residues lysine 203 and lysine 249. 5 consecutive C2H2-type zinc fingers follow at residues isoleucine 277–proline 304, phenylalanine 305–proline 332, tyrosine 333–proline 360, phenylalanine 361–proline 388, and phenylalanine 389–glutamine 417.

It belongs to the krueppel C2H2-type zinc-finger protein family. As to quaternary structure, interacts with ZBTB21.

It localises to the nucleus. Its function is as follows. Transcriptional activator of the dopamine transporter (DAT), binding it's promoter at the consensus sequence 5'-CCTGCACAGTTCACGGA-3'. Binds to 5'-d(GCC)(n)-3' trinucleotide repeats in promoter regions and acts as a repressor of the FMR1 gene. Transcriptional repressor of MYC and thymidine kinase promoters. The polypeptide is Zinc finger and BTB domain-containing protein 14 (ZBTB14) (Homo sapiens (Human)).